A 488-amino-acid polypeptide reads, in one-letter code: Zinc finger protein 92 (488 aa).

The KRAB domain maps to 14–85 (VSFEDVSVYF…DDGMESAARS (72 aa)). 6 C2H2-type zinc fingers span residues 141 to 163 (YLCQQCGKSFSRSFNLIKHRIIH), 169 to 191 (YECSECGKQFQRSLALLEHQRIH), 197 to 219 (YECGECGKTFTRSSNLVKHQVIH), 225 to 247 (FVCRMCGKVFRRSFALLEHTRIH), 253 to 275 (FECTECGKAFSRSSNLIEHQRIH), and 281 to 303 (YICKECGKAFKGVSQLIHHQLIH). The C2H2-type 7; degenerate zinc finger occupies 309-331 (FTCHEYGKAFRGLSGLSQHQRVH). The C2H2-type 8 zinc finger occupies 337–359 (YECSECGRAFGRRANLFKHQVVH). The interval 387-408 (QQPQEAGEGSSAEPQPIDTNEK) is disordered. The segment at 410-432 (QVCERCGQVFENKLLLCRHLRIH) adopts a C2H2-type 9 zinc-finger fold. Positions 435-488 (EDDKKQKPVISSTSVLEDKSLLSQHLEAQPTEESDSEGSVVFVYAEKPHGPSSP) are disordered.

This sequence belongs to the krueppel C2H2-type zinc-finger protein family. As to expression, highly expressed in pancreatic islets.

Its subcellular location is the nucleus. Functionally, KRAB domain-containing zinc-finger protein that represses B1/Alu SINE transposable elements and modulates the transcription of nearby genes in a tissue-specific manner. It regulates glucose homeostasis and lipid metabolism by modulating the expression of the endocrine cell-defining transcription factor, MAFB, in pancreatic islets and, the fat metabolism regulator, ACACB, in adipose tissue and muscle. The polypeptide is Zinc finger protein 92 (Zfp92) (Mus musculus (Mouse)).